A 521-amino-acid chain; its full sequence is 2-isopropylmalate synthase (521 aa).

One can recognise a Pyruvate carboxyltransferase domain in the interval 5–267 (VIIFDTTLRD…HTNIKHQEIH (263 aa)). Asp-14, His-202, His-204, and Asn-238 together coordinate Mn(2+). The segment at 392–521 (KLNYLSVQSG…FAQKTVMETL (130 aa)) is regulatory domain.

The protein belongs to the alpha-IPM synthase/homocitrate synthase family. LeuA type 1 subfamily. Homodimer. Mn(2+) is required as a cofactor.

It is found in the cytoplasm. It catalyses the reaction 3-methyl-2-oxobutanoate + acetyl-CoA + H2O = (2S)-2-isopropylmalate + CoA + H(+). It functions in the pathway amino-acid biosynthesis; L-leucine biosynthesis; L-leucine from 3-methyl-2-oxobutanoate: step 1/4. Catalyzes the condensation of the acetyl group of acetyl-CoA with 3-methyl-2-oxobutanoate (2-ketoisovalerate) to form 3-carboxy-3-hydroxy-4-methylpentanoate (2-isopropylmalate). This Tolumonas auensis (strain DSM 9187 / NBRC 110442 / TA 4) protein is 2-isopropylmalate synthase.